The following is a 422-amino-acid chain: Serine--tRNA ligase (422 aa).

Position 229-231 (229-231 (TAE)) interacts with L-serine. ATP is bound at residue 260-262 (RAE). An L-serine-binding site is contributed by E283. 347-350 (EISS) lines the ATP pocket. L-serine is bound at residue S383.

This sequence belongs to the class-II aminoacyl-tRNA synthetase family. Type-1 seryl-tRNA synthetase subfamily. In terms of assembly, homodimer. The tRNA molecule binds across the dimer.

It localises to the cytoplasm. It catalyses the reaction tRNA(Ser) + L-serine + ATP = L-seryl-tRNA(Ser) + AMP + diphosphate + H(+). The catalysed reaction is tRNA(Sec) + L-serine + ATP = L-seryl-tRNA(Sec) + AMP + diphosphate + H(+). It participates in aminoacyl-tRNA biosynthesis; selenocysteinyl-tRNA(Sec) biosynthesis; L-seryl-tRNA(Sec) from L-serine and tRNA(Sec): step 1/1. Catalyzes the attachment of serine to tRNA(Ser). Is also able to aminoacylate tRNA(Sec) with serine, to form the misacylated tRNA L-seryl-tRNA(Sec), which will be further converted into selenocysteinyl-tRNA(Sec). The sequence is that of Serine--tRNA ligase from Heliobacterium modesticaldum (strain ATCC 51547 / Ice1).